The following is a 325-amino-acid chain: Tetraacyldisaccharide 4'-kinase (325 aa).

Residue 55–62 (TAGGNGKT) coordinates ATP.

This sequence belongs to the LpxK family.

It catalyses the reaction a lipid A disaccharide + ATP = a lipid IVA + ADP + H(+). It functions in the pathway glycolipid biosynthesis; lipid IV(A) biosynthesis; lipid IV(A) from (3R)-3-hydroxytetradecanoyl-[acyl-carrier-protein] and UDP-N-acetyl-alpha-D-glucosamine: step 6/6. Its function is as follows. Transfers the gamma-phosphate of ATP to the 4'-position of a tetraacyldisaccharide 1-phosphate intermediate (termed DS-1-P) to form tetraacyldisaccharide 1,4'-bis-phosphate (lipid IVA). The protein is Tetraacyldisaccharide 4'-kinase of Salmonella newport (strain SL254).